Consider the following 368-residue polypeptide: MMKLAEIQAACGVLCVDLAAVVDNYQTLARHVAPAQCGAVLKANGYGLGAEAIAPALYAANCRIFFVAQLSEGVALRNILSADAMVVLLNGVMPQAMPFCCAQQITPLLNSVDQVMTWLALQEARSQRRPVLIQLDSGMSRLGVTPEQLARLAAIFRQRGWAAPDYIISHLANADRPDHALNVYQHTLLQQAKKAFPTSRYSLANSCGMFLHPAWREDLCRPGVALFGVAQPWFSTPLKPAFTLTLTILRVQDVPVGTPIGYGSTVTTTRPLRIATVSAGYADGIPRNLRPPAGVCWRGVRLPVLGRVCMDSFMVDASAIMPTSGDVVEFIGVSQTLEEVAAACDTIPYEIMARLGARFRRIMQPAEA.

K42 functions as the Proton acceptor; specific for D-alanine in the catalytic mechanism. K42 bears the N6-(pyridoxal phosphate)lysine mark. R141 lines the substrate pocket. Y262 serves as the catalytic Proton acceptor; specific for L-alanine. Residue M310 coordinates substrate.

It belongs to the alanine racemase family. Pyridoxal 5'-phosphate is required as a cofactor.

The enzyme catalyses L-alanine = D-alanine. It functions in the pathway amino-acid biosynthesis; D-alanine biosynthesis; D-alanine from L-alanine: step 1/1. Catalyzes the interconversion of L-alanine and D-alanine. May also act on other amino acids. The polypeptide is Alanine racemase 3 (alr3) (Salmonella typhi).